The primary structure comprises 271 residues: DNA repair protein RecO (271 aa).

The tract at residues 248 to 271 is disordered; the sequence is AVGVEDSVRQDGDRDSTTRTPSSA. A compositionally biased stretch (basic and acidic residues) spans 253 to 264; sequence DSVRQDGDRDST.

This sequence belongs to the RecO family.

Its function is as follows. Involved in DNA repair and RecF pathway recombination. This chain is DNA repair protein RecO, found in Rhodococcus opacus (strain B4).